The primary structure comprises 235 residues: Sperm annulus positionning complex subunit Chibby3 (235 aa).

Residues 1-41 (MADSKMKWGQAWDSSLGTATTSSSSATGSPSPFQNIRVPDT) form a disordered region. Positions 14-32 (SSLGTATTSSSSATGSPSP) are enriched in low complexity. The leucine-zipper; mediates homodimerization stretch occupies residues 167 to 181 (LLEENNYLKLQQELL).

It belongs to the chibby family. Homodimer. Interacts with CIBAR1 (via BAR-like domain); both proteins form a ninefold symmetric structure at the flagellar base; are recruited to the annulus in a mutually dependent manner and regulate annulus positionning. As to expression, testis-specific.

Its subcellular location is the cell projection. It localises to the cilium. The protein localises to the flagellum. Plays a key role in the correct positioning of the annulus, a septin-based ring strucure in the sperm flagellum, serving both as a physical barrier and a membrane diffusion barrier that separates the midpiece (MP) from the principal piece (PP). This positioning is essential for proper sperm motility and function. Interacts with CIBAR1 to form a complex which localizes to the curved membrane region of the flagellar pocket. By doing so, may provide stability and rigidity to the periannular membrane to prevent membrane deformation. This function is crucial for halting annulus migration at the proximal end of the fibrous sheath-containing PP. This Mus musculus (Mouse) protein is Sperm annulus positionning complex subunit Chibby3 (Cby3).